The sequence spans 419 residues: Phosphoglycerate kinase (419 aa).

Substrate contacts are provided by residues 42–44 (DLN), Arg58, 81–84 (HLGR), Arg135, and Arg168. Residues Lys219, Glu341, and 367–370 (GGDT) each bind ATP.

The protein belongs to the phosphoglycerate kinase family. In terms of assembly, monomer.

Its subcellular location is the cytoplasm. It carries out the reaction (2R)-3-phosphoglycerate + ATP = (2R)-3-phospho-glyceroyl phosphate + ADP. The protein operates within carbohydrate degradation; glycolysis; pyruvate from D-glyceraldehyde 3-phosphate: step 2/5. In Ralstonia nicotianae (strain ATCC BAA-1114 / GMI1000) (Ralstonia solanacearum), this protein is Phosphoglycerate kinase.